Here is a 146-residue protein sequence, read N- to C-terminus: Anti-sigma F factor (146 aa).

This sequence belongs to the anti-sigma-factor family.

It carries out the reaction L-seryl-[protein] + ATP = O-phospho-L-seryl-[protein] + ADP + H(+). The catalysed reaction is L-threonyl-[protein] + ATP = O-phospho-L-threonyl-[protein] + ADP + H(+). Functionally, binds to sigma F and blocks its ability to form an RNA polymerase holoenzyme (E-sigma F). Phosphorylates SpoIIAA on a serine residue. This phosphorylation may enable SpoIIAA to act as an anti-anti-sigma factor that counteracts SpoIIAB and thus releases sigma F from inhibition. This Bacillus cereus (strain G9842) protein is Anti-sigma F factor.